A 160-amino-acid polypeptide reads, in one-letter code: Transcriptional repressor NrdR (160 aa).

The segment at 3–34 is a zinc-finger region; that stretch reads CPSCQNTDSRVLESRAADGGRSVRRRRECLNC. The 91-residue stretch at 49-139 folds into the ATP-cone domain; that stretch reads ITVIKRNGNR…VYRQFRGIDD (91 aa).

Belongs to the NrdR family. Requires Zn(2+) as cofactor.

In terms of biological role, negatively regulates transcription of bacterial ribonucleotide reductase nrd genes and operons by binding to NrdR-boxes. The sequence is that of Transcriptional repressor NrdR from Synechococcus sp. (strain CC9605).